We begin with the raw amino-acid sequence, 405 residues long: Deoxyguanosinetriphosphate triphosphohydrolase-like protein (405 aa).

Residues 75 to 219 (RLTHTIEVAQ…AAIADDIAYN (145 aa)) form the HD domain.

The protein belongs to the dGTPase family. Type 2 subfamily.

This is Deoxyguanosinetriphosphate triphosphohydrolase-like protein from Rhizobium meliloti (strain 1021) (Ensifer meliloti).